The primary structure comprises 338 residues: CRISPR system Cmr subunit Cmr1-1 (338 aa).

It belongs to the CRISPR system Cmr1 family. In terms of assembly, part of the type III-B Cmr ribonucleoprotein (RNP) complex, an elongated RNP with Cmr2 and Cmr3 as the base, with Cmr4 and Cmr5 forming a helical core along the mature crRNA (39 or 45 nt in length), while the complex is capped by Cmr6 and Cmr1. The 5' end of the crRNA is bound to Cmr2 and Cmr3, while Cmr6 and a Cmr1 subunit (Cmr1-1 or Cmr1-2) cap the 3' end of the crRNA. The target RNA lies antiparallel to the crRNA, with its 5' end near Cmr1 and Cmr6 and its 3' end near Cmr2 and Cmr3; major target cleavage occurs nears the junction of Cmr1/Cmr6 and Cmr4/Cmr, with minor cleavage occurring at 6 nt intervals which coincide with the proposed spacing of Cmr4 subunits.

Its subcellular location is the cytoplasm. In terms of biological role, CRISPR (clustered regularly interspaced short palindromic repeat), is an adaptive immune system that provides protection against mobile genetic elements (viruses, transposable elements and conjugative plasmids). CRISPR clusters contain sequences complementary to antecedent mobile elements and target invading nucleic acids. CRISPR clusters are transcribed and processed into CRISPR RNA (crRNA), formerly called psiRNA (prokaryotic silencing) in this organism. Part of the Cmr ribonucleoprotein complex which has divalent cation-dependent endoribonuclease activity specific for ssRNA complementary to the crRNA (target RNA), generating 5' hydroxy- and 3' phosphate or 2'-3' cyclic phosphate termini. Cmr4 is probably the subunit that cleaves target RNA. Cmr complex does not cleave ssDNA complementary to the crRNA. Cleavage of invading RNA is guided by the crRNA; substrate cleavage occurs a fixed distance (14 nt) from the 3' end of the crRNA. In vitro reconstitution shows Cmr1-2 and Cmr5 are not absolutely necessary for target cleavage. This chain is CRISPR system Cmr subunit Cmr1-1, found in Pyrococcus furiosus (strain ATCC 43587 / DSM 3638 / JCM 8422 / Vc1).